The primary structure comprises 251 residues: MKKAGLLFLVMIVIAVVATGIGYWKLTGEESDTLRKIVLEQCLPNQQENQNPSPCAEVKPNAGYVVLKDRHGPLQYLLMPTYRINGTESPLLTDPSTPNFFWLAWQARDFMSQKYGQPVPDRAVSLAINSRTGRTQNHFHIHISCIRPDVREQLDNNLANISSRWLPLPGGLRGHEYLARRVTESELVQRSPFMMLAEEVPEAREHMGSYGLAMVRQSDNSFVLLATQRNLLTLNRASAEEIQDHQCEILR.

The chain crosses the membrane as a helical span at residues 4–24 (AGLLFLVMIVIAVVATGIGYW).

This sequence belongs to the Cdh family.

It is found in the cell inner membrane. The enzyme catalyses a CDP-1,2-diacyl-sn-glycerol + H2O = a 1,2-diacyl-sn-glycero-3-phosphate + CMP + 2 H(+). It functions in the pathway phospholipid metabolism; CDP-diacylglycerol degradation; phosphatidate from CDP-diacylglycerol: step 1/1. This is CDP-diacylglycerol pyrophosphatase from Escherichia coli O45:K1 (strain S88 / ExPEC).